A 219-amino-acid polypeptide reads, in one-letter code: Guanylate kinase (219 aa).

The Guanylate kinase-like domain occupies Gly-15–Lys-194. An ATP-binding site is contributed by Ser-22–Thr-29.

Belongs to the guanylate kinase family.

It localises to the cytoplasm. It carries out the reaction GMP + ATP = GDP + ADP. Its function is as follows. Essential for recycling GMP and indirectly, cGMP. In Nitrobacter hamburgensis (strain DSM 10229 / NCIMB 13809 / X14), this protein is Guanylate kinase.